The following is an 867-amino-acid chain: Glutamate receptor 1.2 (867 aa).

The first 27 residues, 1–27 (MVRICIQTPILLSFLLVLLFFISNCFA), serve as a signal peptide directing secretion. Residues 28 to 560 (SSQNNDDDKR…SMWVFFQPLT (533 aa)) lie on the Extracellular side of the membrane. N-linked (GlcNAc...) asparagine glycans are attached at residues Asn-301, Asn-400, Asn-496, and Asn-499. Residues 561 to 581 (PNLWITSAAFFVLTGIIVWLI) form a helical membrane-spanning segment. Topologically, residues 582 to 590 (ERAENKEFQ) are cytoplasmic. The chain crosses the membrane as a helical span at residues 591-611 (GSWPQQIGVVIWFGFSTLVYA). Over 612–622 (HREKLQHNLSR) the chain is Cytoplasmic. A helical transmembrane segment spans residues 623–643 (FVVTVWVFAVLILVTSYTATL). The Extracellular portion of the chain corresponds to 644-792 (TSMMTVQQIR…NPITLYRFRG (149 aa)). 4 N-linked (GlcNAc...) asparagine glycosylation sites follow: Asn-676, Asn-688, Asn-699, and Asn-748. The chain crosses the membrane as a helical span at residues 793 to 813 (LFMITGVSFAFALAVLLILWL). The Cytoplasmic portion of the chain corresponds to 814 to 867 (RERWEILVNSVNIYFSQRLRHFRILFTRTIHPSPLGLDNPIGENAVQMAQRNRR).

The protein belongs to the glutamate-gated ion channel (TC 1.A.10.1) family. As to quaternary structure, may form heteromers. In terms of tissue distribution, expressed predominantly in roots and siliques.

The protein localises to the membrane. In terms of biological role, glutamate-gated receptor that probably acts as a non-selective cation channel. May be involved in light-signal transduction and calcium homeostasis via the regulation of calcium influx into cells. The polypeptide is Glutamate receptor 1.2 (GLR1.2) (Arabidopsis thaliana (Mouse-ear cress)).